We begin with the raw amino-acid sequence, 422 residues long: UDP-N-acetylglucosamine 1-carboxyvinyltransferase (422 aa).

Phosphoenolpyruvate is bound at residue 24–25; that stretch reads KN. Position 93 (arginine 93) interacts with UDP-N-acetyl-alpha-D-glucosamine. Cysteine 117 (proton donor) is an active-site residue. Cysteine 117 carries the 2-(S-cysteinyl)pyruvic acid O-phosphothioketal modification. Residues 122–126, 162–165, aspartate 307, and isoleucine 329 each bind UDP-N-acetyl-alpha-D-glucosamine; these read RPVDL and KVSV.

This sequence belongs to the EPSP synthase family. MurA subfamily.

It is found in the cytoplasm. It catalyses the reaction phosphoenolpyruvate + UDP-N-acetyl-alpha-D-glucosamine = UDP-N-acetyl-3-O-(1-carboxyvinyl)-alpha-D-glucosamine + phosphate. Its pathway is cell wall biogenesis; peptidoglycan biosynthesis. Functionally, cell wall formation. Adds enolpyruvyl to UDP-N-acetylglucosamine. The protein is UDP-N-acetylglucosamine 1-carboxyvinyltransferase of Vibrio atlanticus (strain LGP32) (Vibrio splendidus (strain Mel32)).